A 511-amino-acid chain; its full sequence is Cytochrome P450 77A2 (511 aa).

Heme is bound at residue Cys-456.

It belongs to the cytochrome P450 family. Heme is required as a cofactor.

The protein is Cytochrome P450 77A2 (CYP77A2) of Solanum melongena (Eggplant).